A 250-amino-acid chain; its full sequence is tRNA (guanine-N(1)-)-methyltransferase (250 aa).

S-adenosyl-L-methionine-binding positions include Gly116 and 136–141; that span reads IGDYVL.

Belongs to the RNA methyltransferase TrmD family. As to quaternary structure, homodimer.

The protein localises to the cytoplasm. It carries out the reaction guanosine(37) in tRNA + S-adenosyl-L-methionine = N(1)-methylguanosine(37) in tRNA + S-adenosyl-L-homocysteine + H(+). Functionally, specifically methylates guanosine-37 in various tRNAs. The polypeptide is tRNA (guanine-N(1)-)-methyltransferase (Pseudomonas fluorescens (strain ATCC BAA-477 / NRRL B-23932 / Pf-5)).